A 485-amino-acid chain; its full sequence is 4-alpha-glucanotransferase (485 aa).

It belongs to the disproportionating enzyme family.

Its subcellular location is the cytoplasm. It catalyses the reaction Transfers a segment of a (1-&gt;4)-alpha-D-glucan to a new position in an acceptor, which may be glucose or a (1-&gt;4)-alpha-D-glucan.. The chain is 4-alpha-glucanotransferase (malQ) from Aquifex aeolicus (strain VF5).